Consider the following 607-residue polypeptide: DNA mismatch repair protein MutL (607 aa).

This sequence belongs to the DNA mismatch repair MutL/HexB family.

In terms of biological role, this protein is involved in the repair of mismatches in DNA. It is required for dam-dependent methyl-directed DNA mismatch repair. May act as a 'molecular matchmaker', a protein that promotes the formation of a stable complex between two or more DNA-binding proteins in an ATP-dependent manner without itself being part of a final effector complex. The sequence is that of DNA mismatch repair protein MutL from Gemmatimonas aurantiaca (strain DSM 14586 / JCM 11422 / NBRC 100505 / T-27).